The primary structure comprises 189 residues: UPF0232 protein MLBr00004 (189 aa).

The disordered stretch occupies residues 59-78 (TDRRRNWSGPGPDVRDPQPL).

The protein belongs to the UPF0232 family.

This Mycobacterium leprae (strain Br4923) protein is UPF0232 protein MLBr00004.